We begin with the raw amino-acid sequence, 154 residues long: 6,7-dimethyl-8-ribityllumazine synthase (154 aa).

Residues tryptophan 22, 56-58 (AWE), and 80-82 (CVI) each bind 5-amino-6-(D-ribitylamino)uracil. 85 to 86 (DT) serves as a coordination point for (2S)-2-hydroxy-3-oxobutyl phosphate. Histidine 88 serves as the catalytic Proton donor. Asparagine 113 provides a ligand contact to 5-amino-6-(D-ribitylamino)uracil. Arginine 127 is a (2S)-2-hydroxy-3-oxobutyl phosphate binding site.

This sequence belongs to the DMRL synthase family. As to quaternary structure, forms an icosahedral capsid composed of 60 subunits, arranged as a dodecamer of pentamers.

The catalysed reaction is (2S)-2-hydroxy-3-oxobutyl phosphate + 5-amino-6-(D-ribitylamino)uracil = 6,7-dimethyl-8-(1-D-ribityl)lumazine + phosphate + 2 H2O + H(+). It functions in the pathway cofactor biosynthesis; riboflavin biosynthesis; riboflavin from 2-hydroxy-3-oxobutyl phosphate and 5-amino-6-(D-ribitylamino)uracil: step 1/2. In terms of biological role, catalyzes the formation of 6,7-dimethyl-8-ribityllumazine by condensation of 5-amino-6-(D-ribitylamino)uracil with 3,4-dihydroxy-2-butanone 4-phosphate. This is the penultimate step in the biosynthesis of riboflavin. This Xanthomonas oryzae pv. oryzae (strain MAFF 311018) protein is 6,7-dimethyl-8-ribityllumazine synthase.